Consider the following 282-residue polypeptide: Pantothenate synthetase (282 aa).

Residue 30–37 (MGYLHEGH) coordinates ATP. H37 acts as the Proton donor in catalysis. (R)-pantoate is bound at residue Q61. Residue Q61 participates in beta-alanine binding. ATP is bound at residue 147-150 (GQKD). (R)-pantoate is bound at residue Q153. Residues V176 and 184-187 (MSSR) each bind ATP.

It belongs to the pantothenate synthetase family. As to quaternary structure, homodimer.

The protein resides in the cytoplasm. The catalysed reaction is (R)-pantoate + beta-alanine + ATP = (R)-pantothenate + AMP + diphosphate + H(+). It participates in cofactor biosynthesis; (R)-pantothenate biosynthesis; (R)-pantothenate from (R)-pantoate and beta-alanine: step 1/1. Functionally, catalyzes the condensation of pantoate with beta-alanine in an ATP-dependent reaction via a pantoyl-adenylate intermediate. This is Pantothenate synthetase from Caldicellulosiruptor bescii (strain ATCC BAA-1888 / DSM 6725 / KCTC 15123 / Z-1320) (Anaerocellum thermophilum).